We begin with the raw amino-acid sequence, 864 residues long: Nitrate reductase [NADH] (864 aa).

Mo-molybdopterin is bound at residue Cys-139. One can recognise a Cytochrome b5 heme-binding domain in the interval 497-572 (PRQYTMEEVA…LAQYYIGDLV (76 aa)). Heme contacts are provided by His-532 and His-555. The region spanning 606 to 718 (RQKVKLPLIE…KGPLGHFVYD (113 aa)) is the FAD-binding FR-type domain. FAD is bound by residues 658-661 (RAYT), 675-679 (LIKVY), Phe-680, Phe-687, 692-694 (KMS), and Thr-746.

It belongs to the nitrate reductase family. As to quaternary structure, homodimer. FAD is required as a cofactor. Requires heme as cofactor. It depends on Mo-molybdopterin as a cofactor.

The enzyme catalyses nitrite + NAD(+) + H2O = nitrate + NADH + H(+). Nitrate reductase is a key enzyme involved in the first step of nitrate assimilation in plants, fungi and bacteria. In Volvox carteri (Green alga), this protein is Nitrate reductase [NADH] (NITA).